Consider the following 108-residue polypeptide: ATP synthase subunit H, mitochondrial (108 aa).

The transit peptide at 1–19 (MFTLRAASRRAFSTSIARR) directs the protein to the mitochondrion. Disordered regions lie at residues 40–60 (AKDA…KPPV) and 75–108 (APVD…GVAV). The segment covering 47–60 (VKPWSAPSAPKPPV) has biased composition (low complexity). The segment covering 81–92 (GQTNSKSASPQA) has biased composition (polar residues). Positions 93–108 (NDEDWLAFEEEEGVAV) are enriched in acidic residues.

F-type ATP synthases have 2 components, the catalytic core F(1) and the membrane-embedded component F(0), linked together by a central stalk and a peripheral stalk. The central stalk, also called rotor shaft, is often seen as part of F(1). The peripheral stalk is seen as part of F(0). F(0) contains the membrane channel next to the rotor. F-type ATP synthases form dimers but each monomer functions independently in ATP generation. The dimer consists of 17 different polypeptides: ATP1 (subunit alpha, 3 molecules per monomer, part of F(1)), ATP2 (subunit beta, 3 copies per monomer, part of F(1)), ATP3 (subunit gamma, part of the central stalk), ATP4 (subunit b, part of the peripheral stalk), ATP5/OSCP (subunit 5/OSCP, part of the peripheral stalk), ATP6 (subunit a, part of the peripheral stalk), ATP7 (subunit d, part of the peripheral stalk), ATP8 (subunit 8, part of the peripheral stalk), OLI1 (subunit c, part of the rotor, 10 molecules per monomer), ATP14 (subunit H, part of the peripheral stalk), ATP15 (subunit epsilon, part of the central stalk), ATP16 (subunit delta, part of the central stalk), ATP17 (subunit f, part of the peripheral stalk), ATP18 (subunit i/j, part of the peripheral stalk), ATP19 (subunit k, dimer-specific, at interface between monomers), ATP20 (subunit g, at interface between monomers), TIM11 (subunit e, at interface between monomers).

The protein resides in the mitochondrion inner membrane. Functionally, mitochondrial membrane ATP synthase (F(1)F(0) ATP synthase or Complex V) produces ATP from ADP in the presence of a proton gradient across the membrane which is generated by electron transport complexes of the respiratory chain. F-type ATP synthases consist of two structural domains, F(1) - containing the extramembraneous catalytic core, and F(0) - containing the membrane proton channel, linked together by a central stalk and a peripheral stalk. During catalysis, ATP synthesis in the catalytic domain of F(1) is coupled via a rotary mechanism of the central stalk subunits to proton translocation. Part of the peripheral stalk. This Yarrowia lipolytica (strain CLIB 122 / E 150) (Yeast) protein is ATP synthase subunit H, mitochondrial.